The chain runs to 1406 residues: Receptor-type tyrosine-protein phosphatase eta (1406 aa).

Positions 1-24 (MRRLPLLPPCPLLLLLLLPAEVRC) are cleaved as a signal peptide. At 25-1044 (TTACTDDCSL…LPQDPGVIAG (1020 aa)) the chain is on the extracellular side. 36 N-linked (GlcNAc...) asparagine glycosylation sites follow: N36, N52, N97, N103, N118, N124, N186, N192, N243, N275, N281, N296, N302, N331, N332, N364, N385, N391, N453, N459, N484, N500, N510, N547, N568, N630, N636, N651, N657, N719, N745, N750, N766, N776, N804, and N828. The disordered stretch occupies residues 39-72 (EEMGTSSNDELSVNATSGNRRLSEDVSLPGRAMS). Polar residues predominate over residues 41-58 (MGTSSNDELSVNATSGNR). Fibronectin type-III domains lie at 82 to 170 (AVLD…TKPS), 171 to 259 (PVLD…TKPS), 260 to 343 (PVLD…SLNL), 346 to 437 (KPSP…TKPS), 438 to 523 (PVLD…SLYT), 524 to 614 (KPTP…TKPR), 615 to 703 (AVLH…TKPS), 704 to 793 (MVLN…VPSS), 794 to 888 (VNAF…TDPP), and 887 to 979 (PPVP…IVDV). N-linked (GlcNAc...) asparagine glycosylation is present at N1010. The helical transmembrane segment at 1045–1065 (AVIGCLLAILAVVAIGGYIFW) threads the bilayer. Residues 1066-1406 (RRRRKDKRNT…AFGKANGYHA (341 aa)) are Cytoplasmic-facing. Residues 1110 to 1367 (FAEEYEELKS…VFLNQCVMDI (258 aa)) form the Tyrosine-protein phosphatase domain. Substrate contacts are provided by residues D1274, 1308–1314 (CSAGVGR), and Q1352. C1308 serves as the catalytic Phosphocysteine intermediate.

Belongs to the protein-tyrosine phosphatase family. Receptor class 3 subfamily. Found on the apical surfaces of retinal Mueller cells, renal tubule cells and intestinal brush border cells.

It localises to the cell membrane. The protein resides in the cell projection. It is found in the ruffle membrane. The protein localises to the cell junction. The enzyme catalyses O-phospho-L-tyrosyl-[protein] + H2O = L-tyrosyl-[protein] + phosphate. Functionally, tyrosine phosphatase which dephosphorylates or contributes to the dephosphorylation of several substrates. Plays a role in cell adhesion, migration, proliferation and differentiation. Has a role in megakaryocytes and platelet formation. May influence the potential of nonsensory supporting cells to either proliferate or differentiate into hair cells. The sequence is that of Receptor-type tyrosine-protein phosphatase eta (PTPRJ) from Gallus gallus (Chicken).